Here is a 491-residue protein sequence, read N- to C-terminus: Serine/threonine-protein kinase 3 (491 aa).

Position 1 is an N-acetylmethionine (M1). S15 is modified (phosphoserine). The Protein kinase domain maps to 27–278 (FDVLEKLGEG…ATQLLQHPFI (252 aa)). ATP-binding positions include 33-41 (LGEGSYGSV) and K56. The residue at position 117 (T117) is a Phosphothreonine; by PKB/AKT1. D146 functions as the Proton acceptor in the catalytic mechanism. Mg(2+) is bound by residues N151 and D164. T180 bears the Phosphothreonine; by autocatalysis mark. A coiled-coil region spans residues 291 to 324 (ITEGMEIKAKRHEEQQRELEDEEENSDEDELDSH). 2 disordered regions span residues 301 to 343 (RHEE…TSTM) and 370 to 392 (EDEE…QRPS). Residues 309 to 321 (LEDEEENSDEDEL) show a composition bias toward acidic residues. Residue S316 is modified to Phosphoserine. A compositionally biased stretch (polar residues) spans 326–343 (MVKTSSEGVGTMRATSTM). 2 positions are modified to phosphothreonine: T336 and T378. Residues 381 to 390 (RNATSPQVQR) are compositionally biased toward polar residues. T384 bears the Phosphothreonine; by PKB/AKT1 mark. Residues S385 and S444 each carry the phosphoserine modification. An SARAH domain is found at 437-484 (FDFLKNLSLEELQMRLKALDPMMEREIEELHQRYSAKRQPILDAMDAK).

Belongs to the protein kinase superfamily. STE Ser/Thr protein kinase family. STE20 subfamily. In terms of assembly, homodimer; mediated via the coiled-coil region. Interacts with NORE1, which inhibits autoactivation. Interacts with and stabilizes SAV1. Interacts with RAF1, which prevents dimerization and phosphorylation. Interacts with RASSF1. Interacts (via SARAH domain) with isoform 1 of NEK2. Interacts with ESR1 only in the presence of SAV1. Interacts with PKB/AKT1. Forms a tripartite complex with MOBKL1B and STK38. Interacts with RASSF2 (via SARAH domain). Interacts with DLG5 (via PDZ domain 3). Interacts with LATS1; this interaction is inhibited in the presence of DLG5. Interacts with MARK3 in the presence of DLG5. Interacts with RASSF5; this interaction inhibits STK3 autoactivation through heterodimerization. Interacts (when phosphorylated) with SLMAP (via FHA domain); the interaction associates STK3 with the STRIPAK complex. Requires Mg(2+) as cofactor. Autophosphorylated on two residues Thr-174 and Thr-180, leading to activation. Phosphorylation at Thr-117 and Thr-384 by PKB/AKT1, leads to inhibition of its: cleavage, kinase activity, autophosphorylation at Thr-180, binding to RASSF1 and nuclear translocation, and increase in its binding to RAF1. Phosphorylated at Ser-15 by PLK1, leading to activation. In terms of processing, proteolytically cleaved by caspase-3 during apoptosis. Proteolytic cleavage results in kinase activation and nuclear translocation of the truncated form (MST1/N). Post-translationally, ubiquitinated by TRIM69; leading to its redistribution to the perinuclear cytoskeleton.

Its subcellular location is the cytoplasm. The protein resides in the nucleus. The enzyme catalyses L-seryl-[protein] + ATP = O-phospho-L-seryl-[protein] + ADP + H(+). It carries out the reaction L-threonyl-[protein] + ATP = O-phospho-L-threonyl-[protein] + ADP + H(+). Inhibited by the C-terminal non-catalytic region. Activated by caspase-cleavage. Full activation also requires homodimerization and autophosphorylation of Thr-180, which are inhibited by the proto-oncogene product RAF1. Activated by RASSF1 which acts by preventing its dephosphorylation. When autophosphorylated at Thr-180, recruits STRIPAK complex and promotes PP2A-mediated dephosphorylation and inactivation of STK3. Stress-activated, pro-apoptotic kinase which, following caspase-cleavage, enters the nucleus and induces chromatin condensation followed by internucleosomal DNA fragmentation. Key component of the Hippo signaling pathway which plays a pivotal role in organ size control and tumor suppression by restricting proliferation and promoting apoptosis. The core of this pathway is composed of a kinase cascade wherein STK3/MST2 and STK4/MST1, in complex with its regulatory protein SAV1, phosphorylates and activates LATS1/2 in complex with its regulatory protein MOB1, which in turn phosphorylates and inactivates YAP1 oncoprotein and WWTR1/TAZ. Phosphorylation of YAP1 by LATS2 inhibits its translocation into the nucleus to regulate cellular genes important for cell proliferation, cell death, and cell migration. STK3/MST2 and STK4/MST1 are required to repress proliferation of mature hepatocytes, to prevent activation of facultative adult liver stem cells (oval cells), and to inhibit tumor formation. Phosphorylates NKX2-1. Phosphorylates NEK2 and plays a role in centrosome disjunction by regulating the localization of NEK2 to centrosomes, and its ability to phosphorylate CROCC and CEP250. In conjunction with SAV1, activates the transcriptional activity of ESR1 through the modulation of its phosphorylation. Positively regulates RAF1 activation via suppression of the inhibitory phosphorylation of RAF1 on 'Ser-259'. Phosphorylates MOBKL1A and RASSF2. Phosphorylates MOBKL1B on 'Thr-74'. Acts cooperatively with MOBKL1B to activate STK38. This is Serine/threonine-protein kinase 3 (Stk3) from Rattus norvegicus (Rat).